The sequence spans 161 residues: Large ribosomal subunit protein uL15 (161 aa).

Positions 1 to 44 (MKLSEIADNAGSRKKRMRVGRGIGSGKGKTAGRGGKGQTARSGV) are disordered. Residues 21–37 (RGIGSGKGKTAGRGGKG) are compositionally biased toward gly residues.

It belongs to the universal ribosomal protein uL15 family. Part of the 50S ribosomal subunit.

Functionally, binds to the 23S rRNA. This Rhodopseudomonas palustris (strain BisA53) protein is Large ribosomal subunit protein uL15.